Reading from the N-terminus, the 505-residue chain is ATP synthase subunit alpha (505 aa).

170-177 (GDRQTGKT) is a binding site for ATP.

Belongs to the ATPase alpha/beta chains family. F-type ATPases have 2 components, CF(1) - the catalytic core - and CF(0) - the membrane proton channel. CF(1) has five subunits: alpha(3), beta(3), gamma(1), delta(1), epsilon(1). CF(0) has four main subunits: a(1), b(1), b'(1) and c(9-12).

It localises to the cellular thylakoid membrane. It carries out the reaction ATP + H2O + 4 H(+)(in) = ADP + phosphate + 5 H(+)(out). Its function is as follows. Produces ATP from ADP in the presence of a proton gradient across the membrane. The alpha chain is a regulatory subunit. This is ATP synthase subunit alpha from Trichodesmium erythraeum (strain IMS101).